Reading from the N-terminus, the 339-residue chain is UDP-galactose transporter homolog 1 (339 aa).

Helical transmembrane passes span 5-25 (ILKH…WGLL), 43-63 (VPYI…LIYI), 91-111 (AISA…TYML), 138-158 (LVVL…HKPS), 171-191 (SSLI…LTNA), 208-228 (HLMF…MVLV), 246-268 (ISRY…FYTL), 273-295 (SLVL…IIVY), and 301-321 (LWQW…SMGK).

The protein belongs to the nucleotide-sugar transporter family. SLC35B subfamily.

Its subcellular location is the endoplasmic reticulum membrane. Its function is as follows. May be involved in specific transport of UDP-Gal from the cytosol to the Golgi lumen. Involved in the maintenance of optimal conditions for the folding of secretory pathway proteins in the endoplasmic reticulum. The chain is UDP-galactose transporter homolog 1 (HUT1) from Kluyveromyces lactis (strain ATCC 8585 / CBS 2359 / DSM 70799 / NBRC 1267 / NRRL Y-1140 / WM37) (Yeast).